Here is a 330-residue protein sequence, read N- to C-terminus: DNA-directed RNA polymerase subunit alpha (330 aa).

Residues 1–236 form an alpha N-terminal domain (alpha-NTD) region; the sequence is MQGSVTEFLK…EQLDAFVDLR (236 aa). The alpha C-terminal domain (alpha-CTD) stretch occupies residues 250 to 330; that stretch reads FDPILLRPVD…NWPPASIAED (81 aa).

The protein belongs to the RNA polymerase alpha chain family. As to quaternary structure, homodimer. The RNAP catalytic core consists of 2 alpha, 1 beta, 1 beta' and 1 omega subunit. When a sigma factor is associated with the core the holoenzyme is formed, which can initiate transcription.

The catalysed reaction is RNA(n) + a ribonucleoside 5'-triphosphate = RNA(n+1) + diphosphate. In terms of biological role, DNA-dependent RNA polymerase catalyzes the transcription of DNA into RNA using the four ribonucleoside triphosphates as substrates. This is DNA-directed RNA polymerase subunit alpha from Vibrio cholerae serotype O1 (strain ATCC 39315 / El Tor Inaba N16961).